The primary structure comprises 186 residues: Dihydrofolate reductase (186 aa).

A DHFR domain is found at 2 to 180; that stretch reads RLNVVVAVSE…FTFKFCVYDV (179 aa). NADP(+) is bound by residues Ala8 and 14-20; that span reads GIGKGGG. Residue 28 to 33 coordinates substrate; the sequence is DMEFFK. NADP(+) is bound at residue 51–53; sequence RVT. Substrate is bound at residue Arg67. NADP(+) is bound by residues 73-75 and 112-119; these read SST and GGYRLYKE.

This sequence belongs to the dihydrofolate reductase family. In terms of assembly, monomer.

The catalysed reaction is (6S)-5,6,7,8-tetrahydrofolate + NADP(+) = 7,8-dihydrofolate + NADPH + H(+). Its pathway is cofactor biosynthesis; tetrahydrofolate biosynthesis; 5,6,7,8-tetrahydrofolate from 7,8-dihydrofolate: step 1/1. Its function is as follows. Key enzyme in folate metabolism. Contributes to the de novo mitochondrial thymidylate biosynthesis pathway. Catalyzes an essential reaction for de novo glycine and purine synthesis, and for DNA precursor synthesis. This chain is Dihydrofolate reductase, found in Schistosoma mansoni (Blood fluke).